A 103-amino-acid polypeptide reads, in one-letter code: Pyrimidine/purine nucleoside phosphorylase (103 aa).

The protein belongs to the nucleoside phosphorylase PpnP family.

It carries out the reaction a purine D-ribonucleoside + phosphate = a purine nucleobase + alpha-D-ribose 1-phosphate. It catalyses the reaction adenosine + phosphate = alpha-D-ribose 1-phosphate + adenine. The enzyme catalyses cytidine + phosphate = cytosine + alpha-D-ribose 1-phosphate. The catalysed reaction is guanosine + phosphate = alpha-D-ribose 1-phosphate + guanine. It carries out the reaction inosine + phosphate = alpha-D-ribose 1-phosphate + hypoxanthine. It catalyses the reaction thymidine + phosphate = 2-deoxy-alpha-D-ribose 1-phosphate + thymine. The enzyme catalyses uridine + phosphate = alpha-D-ribose 1-phosphate + uracil. The catalysed reaction is xanthosine + phosphate = alpha-D-ribose 1-phosphate + xanthine. Functionally, catalyzes the phosphorolysis of diverse nucleosides, yielding D-ribose 1-phosphate and the respective free bases. Can use uridine, adenosine, guanosine, cytidine, thymidine, inosine and xanthosine as substrates. Also catalyzes the reverse reactions. This Shewanella baltica (strain OS195) protein is Pyrimidine/purine nucleoside phosphorylase.